The sequence spans 335 residues: N-acetylmuramoyl-L-alanine amidase sle1 (335 aa).

Positions 1–25 are cleaved as a signal peptide; it reads MQKKVIAAIIGTSAISAVAATQANA. In terms of domain architecture, LysM 1 spans 27 to 70; the sequence is TTHTVKPGESVWAISNKYGISIAKLKSLNNLTSNLIFPNQVLKV. Residues 71 to 86 show a composition bias toward low complexity; that stretch reads SGSSNSTSNSSRPSTN. The segment at 71–90 is disordered; the sequence is SGSSNSTSNSSRPSTNSGGG. LysM domains follow at residues 91–134 and 158–201; these read SYYT…KLKV. The Peptidase C51 domain maps to 211-335; it reads ASATTTNRGY…YQVNNYRYIH (125 aa).

The protein localises to the secreted. It is found in the cell surface. It catalyses the reaction Hydrolyzes the link between N-acetylmuramoyl residues and L-amino acid residues in certain cell-wall glycopeptides.. In terms of biological role, peptidoglycan hydrolase involved in the splitting of the septum during cell division. The chain is N-acetylmuramoyl-L-alanine amidase sle1 (sle1) from Staphylococcus aureus (strain bovine RF122 / ET3-1).